Reading from the N-terminus, the 370-residue chain is Uroporphyrinogen decarboxylase (370 aa).

Substrate contacts are provided by residues 29–33 (RQAGR), Asp-79, Tyr-155, Ser-210, and His-342.

Belongs to the uroporphyrinogen decarboxylase family. Homodimer.

Its subcellular location is the cytoplasm. The catalysed reaction is uroporphyrinogen III + 4 H(+) = coproporphyrinogen III + 4 CO2. It participates in porphyrin-containing compound metabolism; protoporphyrin-IX biosynthesis; coproporphyrinogen-III from 5-aminolevulinate: step 4/4. Catalyzes the decarboxylation of four acetate groups of uroporphyrinogen-III to yield coproporphyrinogen-III. The sequence is that of Uroporphyrinogen decarboxylase from Verminephrobacter eiseniae (strain EF01-2).